The following is a 433-amino-acid chain: MSSEKFTVTEHLVPGSYIREYPGSTVTQEDVLKIHVKQYTPKHEGPVPADAITFIAAHGVGLPKELYEPLWDELLERTNGFHIHGIWVADVASMNQSGIQNEDKLSMDCSWMDHPRDLFLMINHFREQMPRPLVGVGHSFGGNIITNLAYLHPRLFTTLLLIDPLIQLSPPSMGFGTDPPGPINYTLWRNDVWPSREAAIRANRGLIHGWDPRCVDRMAKYFFRDLPTPLYPDVEAVKARFDAAADTTATPVTLATPKYHELIAQIRQNFNARDPTTGRIEIPRATHADMDPLVASIPLYRPEPRSTFRRLGTLRPSCLWIVGGATFLNVDEIHEGVKICGSGIGGSGGVSEGRVKEVILPGLGHLMPFQEIGTVVGPCVAWLQQEMDRFRQMEREWGEERKGKSHLVLEKNWYKVLKPMPSGRGKGGRKEKL.

The tract at residues 58–246 (HGVGLPKELY…VKARFDAAAD (189 aa)) is abhydrolase domain. Val60 contacts substrate. The active-site Nucleophile is Ser139. Phe140 is a binding site for substrate. Residues Asp163 and His365 contribute to the active site.

The protein belongs to the AB hydrolase superfamily. MpaH hydrolase family. In terms of assembly, homodimer.

It is found in the peroxisome matrix. The catalysed reaction is mycophenolyl-CoA + H2O = mycophenolate + CoA + H(+). Its pathway is secondary metabolite biosynthesis; terpenoid biosynthesis. Type I acyl-CoA thioesterase; part of the gene cluster that mediates the biosynthesis of mycophenolic acid (MPA), the first isolated antibiotic natural product in the world obtained from a culture of Penicillium brevicompactum in 1893. MpaH acts as a peroxisomal acyl-CoA hydrolase that converts MPA-CoA into the final product MPA. The first step of the pathway is the synthesis of 5-methylorsellinic acid (5MOA) by the cytosolic polyketide synthase mpaC. 5MOA is then converted to the phthalide compound 5,7-dihydroxy-4,6-dimethylphthalide (DHMP) by the endoplasmic reticulum-bound cytochrome P450 monooxygenase mpaDE. MpaDE first catalyzes hydroxylation of 5-MOA to 4,6-dihydroxy-2-(hydroxymethyl)-3-methylbenzoic acid (DHMB). MpaDE then acts as a lactone synthase that catalyzes the ring closure to convert DHMB into DHMP. The next step is the prenylation of DHMP by the Golgi apparatus-associated prenyltransferase mpaA to yield farnesyl-DHMP (FDHMP). The ER-bound oxygenase mpaB then mediates the oxidative cleavage the C19-C20 double bond in FDHMP to yield FDHMP-3C via a mycophenolic aldehyde intermediate. The O-methyltransferase mpaG catalyzes the methylation of FDHMP-3C to yield MFDHMP-3C. After the cytosolic methylation of FDHMP-3C, MFDHMP-3C enters into peroxisomes probably via free diffusion due to its low molecular weight. Upon a peroxisomal CoA ligation reaction, catalyzed by a beta-oxidation component enzyme acyl-CoA ligase ACL891, MFDHMP-3C-CoA would then be restricted to peroxisomes for the following beta-oxidation pathway steps. The peroxisomal beta-oxidation machinery than converts MFDHMP-3C-CoA into MPA_CoA, via a beta-oxidation chain-shortening process. Finally mpaH acts as a peroxisomal acyl-CoA hydrolase with high substrate specificity toward MPA-CoA to release the final product MPA. The chain is Type I acyl-CoA thioesterase mpaH from Penicillium roqueforti (strain FM164).